A 359-amino-acid polypeptide reads, in one-letter code: MAADGKNVLIMAGGTGGHVFPALACAREFQARGYSVHWLGTPRGIENELVPQAGLPLHLIQVTGLRGKGKLSLLKAPFTLVKAVLQARRIVRELKPVCVIGFGGYVTGPGGVAARLCGVPLVIHEQNARAGTANRLLVPLAARVCEAFPGTFEANDKLRTTGNPVRPELFMDAQRAPLAERRARLLVMGGSLGAEPLNKLLPKALSEVPANLRPEVFHQAGKNHAPTTAERYHEAGVEAQVEPFIKDMAHAYGWADMVVCRAGALTVSELAAAGLPSVLVPLPHAIDDHQTHNAQYLAREGAAFLMPQATTGAAQLAERLNEVLMQPEKLNTMAGTARRLAKPAATSTVVDICLEVAHG.

Residues 15–17 (TGG), asparagine 127, arginine 166, serine 191, isoleucine 245, 264–269 (ALTVSE), and glutamine 290 each bind UDP-N-acetyl-alpha-D-glucosamine.

The protein belongs to the glycosyltransferase 28 family. MurG subfamily.

The protein localises to the cell inner membrane. It carries out the reaction di-trans,octa-cis-undecaprenyl diphospho-N-acetyl-alpha-D-muramoyl-L-alanyl-D-glutamyl-meso-2,6-diaminopimeloyl-D-alanyl-D-alanine + UDP-N-acetyl-alpha-D-glucosamine = di-trans,octa-cis-undecaprenyl diphospho-[N-acetyl-alpha-D-glucosaminyl-(1-&gt;4)]-N-acetyl-alpha-D-muramoyl-L-alanyl-D-glutamyl-meso-2,6-diaminopimeloyl-D-alanyl-D-alanine + UDP + H(+). It participates in cell wall biogenesis; peptidoglycan biosynthesis. Its function is as follows. Cell wall formation. Catalyzes the transfer of a GlcNAc subunit on undecaprenyl-pyrophosphoryl-MurNAc-pentapeptide (lipid intermediate I) to form undecaprenyl-pyrophosphoryl-MurNAc-(pentapeptide)GlcNAc (lipid intermediate II). The sequence is that of UDP-N-acetylglucosamine--N-acetylmuramyl-(pentapeptide) pyrophosphoryl-undecaprenol N-acetylglucosamine transferase from Pseudomonas entomophila (strain L48).